The sequence spans 531 residues: MADTGGRPEVSLATVRSPGHPAASTTAAAAADLGHADTGQEKPTVESAQPANGAAPMGECGTEYRGLPDGDAGGPMPSSARTVSMIPLIFLIFYEVSGGPFGIEDSVGAAGPLLAIIGFLVLPVIWSIPEALITAELGAMFPENGGYVVWVASALGPYWGFQQGWMKWLSGVIDNALYPVLFLDYLKSGVPALGGGAPRAFAVVGLTAVLTLLNYRGLTVVGWVAICLGVFSLLPFFVMGLIALPKLRPARWLVIDLHNVDWNLYLNTLFWNLNYWDSISTLAGEVKNPGKTLPKALFYAVIFVVVAYLYPLLAGTGAVPLDRGQWTDGYFADIAKLLGGAWLMWWVQSAAALSNMGMFVAEMSSDSYQLLGMAERGMLPSFFAARSRYGTPLAGILFSASGVLLLSMMSFQEIVAAENFLYCFGMLLEFVAFILHRVRRPDAARPYRVPLGTAGCVAMLVPPTALIAVVLALSTLKVAVVSLGAVAMGLVLQPALRFVEKKRWLRFSVNPDLPEIGVIRPPAAPDEPLVP.

Residues 1–76 form a disordered region; it reads MADTGGRPEV…LPDGDAGGPM (76 aa). Residues 17-33 show a composition bias toward low complexity; the sequence is SPGHPAASTTAAAAADL. A compositionally biased stretch (basic and acidic residues) spans 34–44; the sequence is GHADTGQEKPT. The next 12 helical transmembrane spans lie at 83–103, 113–133, 147–167, 193–213, 224–244, 262–284, 296–316, 341–361, 391–411, 414–434, 453–473, and 476–496; these read VSMI…PFGI, LLAI…EALI, YVVW…GWMK, LGGG…LTLL, VAIC…LIAL, WNLY…TLAG, ALFY…LAGT, AWLM…MFVA, TPLA…MMSF, IVAA…VAFI, TAGC…VLAL, and LKVA…QPAL.

The protein belongs to the amino acid-polyamine-organocation (APC) superfamily. Polyamine:cation symporter (PHS) (TC 2.A.3.12) family. Expressed in seedling roots, leaves, stems, flowers and siliques.

It localises to the cell membrane. In terms of biological role, cell membrane polyamine/proton symporter involved in the polyamine uptake in cells. Possesses high affinity for spermidine and lower affinity for spermine and putrescine. Transports paraquat, a polyamine analog, and thus confers sensitivity to this chemical which is used as a herbicide. The polypeptide is Polyamine transporter PUT1 (PUT1) (Oryza sativa subsp. japonica (Rice)).